Here is a 184-residue protein sequence, read N- to C-terminus: Protein GrpE (184 aa).

Positions 1–35 (MTQENQNPPPEQEDVAADPQVNEAAASEPAAVKTP) are disordered.

It belongs to the GrpE family. In terms of assembly, homodimer.

Its subcellular location is the cytoplasm. Participates actively in the response to hyperosmotic and heat shock by preventing the aggregation of stress-denatured proteins, in association with DnaK and GrpE. It is the nucleotide exchange factor for DnaK and may function as a thermosensor. Unfolded proteins bind initially to DnaJ; upon interaction with the DnaJ-bound protein, DnaK hydrolyzes its bound ATP, resulting in the formation of a stable complex. GrpE releases ADP from DnaK; ATP binding to DnaK triggers the release of the substrate protein, thus completing the reaction cycle. Several rounds of ATP-dependent interactions between DnaJ, DnaK and GrpE are required for fully efficient folding. In Polynucleobacter asymbioticus (strain DSM 18221 / CIP 109841 / QLW-P1DMWA-1) (Polynucleobacter necessarius subsp. asymbioticus), this protein is Protein GrpE.